The primary structure comprises 313 residues: tRNA dimethylallyltransferase (313 aa).

11–18 (GPTACGKT) contacts ATP. 13–18 (TACGKT) is a binding site for substrate. Interaction with substrate tRNA stretches follow at residues 36-39 (DSAL), 160-164 (QRIGR), and 243-248 (RCVGYR).

Belongs to the IPP transferase family. Monomer. Requires Mg(2+) as cofactor.

The catalysed reaction is adenosine(37) in tRNA + dimethylallyl diphosphate = N(6)-dimethylallyladenosine(37) in tRNA + diphosphate. In terms of biological role, catalyzes the transfer of a dimethylallyl group onto the adenine at position 37 in tRNAs that read codons beginning with uridine, leading to the formation of N6-(dimethylallyl)adenosine (i(6)A). The sequence is that of tRNA dimethylallyltransferase from Neisseria gonorrhoeae (strain NCCP11945).